A 217-amino-acid polypeptide reads, in one-letter code: U2 snRNP component ist3 (217 aa).

Residues alanine 31 to serine 109 enclose the RRM domain. Disordered regions lie at residues proline 119–asparagine 138 and glutamate 154–glycine 217. A compositionally biased stretch (polar residues) spans serine 128–asparagine 138. Phosphoserine is present on serine 160. Basic and acidic residues-rich tracts occupy residues proline 161 to histidine 176 and histidine 185 to arginine 198. The segment covering histidine 199–glycine 217 has biased composition (basic residues).

It belongs to the IST3 family. In terms of assembly, belongs to the 40S cdc5-associated complex (or cwf complex), a spliceosome sub-complex reminiscent of a late-stage spliceosome composed of the U2, U5 and U6 snRNAs and at least brr2, cdc5, cwf2/prp3, cwf3/syf1, cwf4/syf3, cwf5/ecm2, spp42/cwf6, cwf7/spf27, cwf8, cwf9, cwf10, cwf11, cwf12, prp45/cwf13, cwf14, cwf15, cwf16, cwf17, cwf18, cwf19, cwf20, cwf21, cwf22, cwf23, cwf24, cwf25, cwf26, cyp7/cwf27, cwf28, cwf29/ist3, lea1, msl1, prp5/cwf1, prp10, prp12/sap130, prp17, prp22, sap61, sap62, sap114, sap145, slu7, smb1, smd1, smd3, smf1, smg1 and syf2.

It is found in the nucleus. In terms of biological role, required for pre-mRNA splicing and spliceosome assembly. This Schizosaccharomyces pombe (strain 972 / ATCC 24843) (Fission yeast) protein is U2 snRNP component ist3 (cwf29).